The chain runs to 295 residues: 33 kDa chaperonin (295 aa).

2 disulfides stabilise this stretch: cysteine 237-cysteine 239 and cysteine 270-cysteine 273.

The protein belongs to the HSP33 family. Post-translationally, under oxidizing conditions two disulfide bonds are formed involving the reactive cysteines. Under reducing conditions zinc is bound to the reactive cysteines and the protein is inactive.

It is found in the cytoplasm. Functionally, redox regulated molecular chaperone. Protects both thermally unfolding and oxidatively damaged proteins from irreversible aggregation. Plays an important role in the bacterial defense system toward oxidative stress. The polypeptide is 33 kDa chaperonin (Shouchella clausii (strain KSM-K16) (Alkalihalobacillus clausii)).